A 349-amino-acid polypeptide reads, in one-letter code: Green-sensitive opsin-3 (349 aa).

At 1–36 (MNGTEGNNFYIPMSNRTGLVRSPYEYPQYYLAEPWQ) the chain is on the extracellular side. Residues asparagine 2 and asparagine 15 are each glycosylated (N-linked (GlcNAc...) asparagine). The chain crosses the membrane as a helical span at residues 37 to 61 (FKLLAVYMFFLMCFGFPINGLTLVV). Over 62–73 (TAQHKKLRQPLN) the chain is Cytoplasmic. The helical transmembrane segment at 74-99 (FILVNLAVAGTIMVCFGFTVTFYTAI) threads the bilayer. At 100–113 (NGYFVLGPTGCAIE) the chain is on the extracellular side. Cysteine 110 and cysteine 187 are disulfide-bonded. The chain crosses the membrane as a helical span at residues 114-133 (GFMATLGGQISLWSLVVLAI). Residues 134–152 (ERYIVVCKPMGSFKFSSNH) are Cytoplasmic-facing. The helical transmembrane segment at 153-176 (AFAGIGFTWIMALSCAAPPLVGWS) threads the bilayer. The Extracellular segment spans residues 177–202 (RYIPEGMQCSCGPDYYTLNPDYNNES). Asparagine 200 carries an N-linked (GlcNAc...) asparagine glycan. A helical transmembrane segment spans residues 203 to 230 (YVLYMFCCHFIFPVTTIFFTYGRLVCTV). Residues 231–252 (KAAAAQQQESESTQKAEREVTR) are Cytoplasmic-facing. The helical transmembrane segment at 253–276 (MVILMVLGFLVAWTPYASVAAWIF) threads the bilayer. Over 277 to 284 (FNRGAAFS) the chain is Extracellular. A helical transmembrane segment spans residues 285–309 (AQFMAVPAFFSKSSSIFNPIIYVLL). Position 296 is an N6-(retinylidene)lysine (lysine 296). The Cytoplasmic portion of the chain corresponds to 310–349 (NKQFRNCMLTTLFCGKNPLGDDESSTVSTSKTEVSSVSPA). The segment at 329 to 349 (GDDESSTVSTSKTEVSSVSPA) is disordered. Low complexity predominate over residues 334 to 349 (STVSTSKTEVSSVSPA).

Belongs to the G-protein coupled receptor 1 family. Opsin subfamily. Phosphorylated on some or all of the serine and threonine residues present in the C-terminal region.

The protein localises to the membrane. Functionally, visual pigments are the light-absorbing molecules that mediate vision. They consist of an apoprotein, opsin, covalently linked to cis-retinal. This is Green-sensitive opsin-3 (opn1mw3) from Danio rerio (Zebrafish).